We begin with the raw amino-acid sequence, 137 residues long: Fluoride-specific ion channel FluC 2 (137 aa).

Transmembrane regions (helical) follow at residues 3-23 (MGGS…SVLG), 44-64 (WGTM…GALA), 76-96 (PWLF…SFSL), and 111-131 (LGNV…GFLL). Na(+) contacts are provided by Gly86 and Thr89.

Belongs to the fluoride channel Fluc/FEX (TC 1.A.43) family.

It is found in the cell inner membrane. The catalysed reaction is fluoride(in) = fluoride(out). Its activity is regulated as follows. Na(+) is not transported, but it plays an essential structural role and its presence is essential for fluoride channel function. Functionally, fluoride-specific ion channel. Important for reducing fluoride concentration in the cell, thus reducing its toxicity. This chain is Fluoride-specific ion channel FluC 2, found in Bradyrhizobium diazoefficiens (strain JCM 10833 / BCRC 13528 / IAM 13628 / NBRC 14792 / USDA 110).